Consider the following 158-residue polypeptide: Transcriptional regulator MraZ (158 aa).

SpoVT-AbrB domains lie at 7-54 and 84-127; these read NIEA…PEEV and VEII…AKER.

Belongs to the MraZ family. In terms of assembly, forms oligomers.

It localises to the cytoplasm. It is found in the nucleoid. This chain is Transcriptional regulator MraZ, found in Bacteroides fragilis (strain ATCC 25285 / DSM 2151 / CCUG 4856 / JCM 11019 / LMG 10263 / NCTC 9343 / Onslow / VPI 2553 / EN-2).